The chain runs to 215 residues: Probable phosphoglycerate mutase GpmB (215 aa).

Residues 8–15 (RHGETQWN), 21–22 (QG), Arg-58, Arg-60, 82–85 (ELNM), 104–105 (RR), and 151–152 (GI) each bind substrate. The Tele-phosphohistidine intermediate role is filled by His-9. The active-site Proton donor/acceptor is Glu-82.

It belongs to the phosphoglycerate mutase family. GpmB subfamily.

It catalyses the reaction (2R)-2-phosphoglycerate = (2R)-3-phosphoglycerate. It participates in carbohydrate degradation; glycolysis; pyruvate from D-glyceraldehyde 3-phosphate: step 3/5. The chain is Probable phosphoglycerate mutase GpmB from Escherichia coli O9:H4 (strain HS).